Here is a 524-residue protein sequence, read N- to C-terminus: Bifunctional purine biosynthesis protein PurH (524 aa).

Residues 1 to 144 enclose the MGS-like domain; it reads MVRRALVSVS…KNAAHVGVVV (144 aa).

Belongs to the PurH family.

It carries out the reaction (6R)-10-formyltetrahydrofolate + 5-amino-1-(5-phospho-beta-D-ribosyl)imidazole-4-carboxamide = 5-formamido-1-(5-phospho-D-ribosyl)imidazole-4-carboxamide + (6S)-5,6,7,8-tetrahydrofolate. It catalyses the reaction IMP + H2O = 5-formamido-1-(5-phospho-D-ribosyl)imidazole-4-carboxamide. It participates in purine metabolism; IMP biosynthesis via de novo pathway; 5-formamido-1-(5-phospho-D-ribosyl)imidazole-4-carboxamide from 5-amino-1-(5-phospho-D-ribosyl)imidazole-4-carboxamide (10-formyl THF route): step 1/1. The protein operates within purine metabolism; IMP biosynthesis via de novo pathway; IMP from 5-formamido-1-(5-phospho-D-ribosyl)imidazole-4-carboxamide: step 1/1. The chain is Bifunctional purine biosynthesis protein PurH from Anaeromyxobacter sp. (strain Fw109-5).